The chain runs to 237 residues: tRNA (guanine-N(7)-)-methyltransferase (237 aa).

S-adenosyl-L-methionine contacts are provided by Glu-68, Glu-93, Asp-120, and Asp-143. Asp-143 is a catalytic residue. Substrate is bound by residues Lys-147, Asp-179, and 216–219 (TKFE).

Belongs to the class I-like SAM-binding methyltransferase superfamily. TrmB family.

It carries out the reaction guanosine(46) in tRNA + S-adenosyl-L-methionine = N(7)-methylguanosine(46) in tRNA + S-adenosyl-L-homocysteine. It participates in tRNA modification; N(7)-methylguanine-tRNA biosynthesis. Catalyzes the formation of N(7)-methylguanine at position 46 (m7G46) in tRNA. The chain is tRNA (guanine-N(7)-)-methyltransferase from Shewanella piezotolerans (strain WP3 / JCM 13877).